The primary structure comprises 236 residues: Small ribosomal subunit protein uS2c (236 aa).

It belongs to the universal ribosomal protein uS2 family.

It localises to the plastid. Its subcellular location is the chloroplast. This is Small ribosomal subunit protein uS2c (rps2) from Liriodendron tulipifera (Tuliptree).